The primary structure comprises 170 residues: Ribosome maturation factor RimM (170 aa).

The PRC barrel domain maps to 97-170; that stretch reads HPDEYYWVDL…RIVVDWDPEF (74 aa).

The protein belongs to the RimM family. In terms of assembly, binds ribosomal protein uS19.

It localises to the cytoplasm. In terms of biological role, an accessory protein needed during the final step in the assembly of 30S ribosomal subunit, possibly for assembly of the head region. Essential for efficient processing of 16S rRNA. May be needed both before and after RbfA during the maturation of 16S rRNA. It has affinity for free ribosomal 30S subunits but not for 70S ribosomes. This chain is Ribosome maturation factor RimM, found in Xylella fastidiosa (strain M23).